The chain runs to 133 residues: Large ribosomal subunit protein bL12 (133 aa).

Residues 98–118 (DMVESTPKPIKEGTGKEDAED) are disordered.

It belongs to the bacterial ribosomal protein bL12 family. As to quaternary structure, homodimer. Part of the ribosomal stalk of the 50S ribosomal subunit. Forms a multimeric L10(L12)X complex, where L10 forms an elongated spine to which 2 to 4 L12 dimers bind in a sequential fashion. Binds GTP-bound translation factors.

Forms part of the ribosomal stalk which helps the ribosome interact with GTP-bound translation factors. Is thus essential for accurate translation. The protein is Large ribosomal subunit protein bL12 of Crocosphaera subtropica (strain ATCC 51142 / BH68) (Cyanothece sp. (strain ATCC 51142)).